Reading from the N-terminus, the 1078-residue chain is Disheveled-associated activator of morphogenesis 1 (1078 aa).

S34 bears the Phosphoserine mark. A GBD/FH3 domain is found at 45-420; it reads LPMPPVEELD…QIVIQNDKGQ (376 aa). Residues 437–526 adopt a coiled-coil conformation; that stretch reads RMLVNENEVK…ELSRRAVCAS (90 aa). Disordered stretches follow at residues 456-480 and 524-585; these read RKEH…TQEK and CASI…PLGA. One can recognise an FH1 domain in the interval 528-599; the sequence is PGGPSPGAPG…PGAPMGLALK (72 aa). 2 stretches are compositionally biased toward pro residues: residues 530–539 and 548–585; these read GPSPGAPGGP and LLPP…PLGA. An FH2 domain is found at 600-1009; sequence KKSIPQPTNA…EERRARMEAQ (410 aa). An actin-binding region spans residues 693-702; the sequence is AQNCNILLSR. Positions 987-1027 are enriched in basic and acidic residues; sequence KQENENMRKKKEEEERRARMEAQLKEQRERERKMRKAKENS. Disordered stretches follow at residues 987 to 1034 and 1055 to 1078; these read KQEN…GEFD and RNRK…KLNF. Phosphoserine occurs at positions 1027 and 1030. The 32-residue stretch at 1027 to 1058 folds into the DAD domain; that stretch reads SEESGEFDDLVSALRSGEVFDKDLSKLKRNRK. A compositionally biased stretch (basic and acidic residues) spans 1067–1078; sequence SSRERPITKLNF.

This sequence belongs to the formin homology family. Homodimer. Interacts with CIP4, FNBP1 and FNBP1L. Interacts with the SH3 domains of Abl, BTK, endophilin, spectrin and SRC. Binds specifically to GTP-bound CDC42 and RHOA. Interacts with INTU; INTU mediates the indirect interaction between DAAM1 and NPHP4. Interacts (via coiled coil domain) with KANK1 (via coiled coil domain). In terms of tissue distribution, expressed in all tissues examined.

Its subcellular location is the cytoplasm. It is found in the cytoskeleton. The protein localises to the cilium basal body. Its function is as follows. Binds to disheveled (Dvl) and Rho, and mediates Wnt-induced Dvl-Rho complex formation. May play a role as a scaffolding protein to recruit Rho-GDP and Rho-GEF, thereby enhancing Rho-GTP formation. Can direct nucleation and elongation of new actin filaments. Involved in building functional cilia. Involved in the organization of the subapical actin network in multiciliated epithelial cells. Together with DAAM2, required for myocardial maturation and sarcomere assembly. During cell division, may regulate RHOA activation that signals spindle orientation and chromosomal segregation. This Homo sapiens (Human) protein is Disheveled-associated activator of morphogenesis 1 (DAAM1).